A 280-amino-acid chain; its full sequence is Large ribosomal subunit protein uL2 (280 aa).

The interval 229–280 (DHPHGGGEGKAPIGHPSPLTPWGKPTLGYKTRKKRKPSDRFIIQRANDKKEK) is disordered.

This sequence belongs to the universal ribosomal protein uL2 family. As to quaternary structure, part of the 50S ribosomal subunit. Forms a bridge to the 30S subunit in the 70S ribosome.

One of the primary rRNA binding proteins. Required for association of the 30S and 50S subunits to form the 70S ribosome, for tRNA binding and peptide bond formation. It has been suggested to have peptidyltransferase activity; this is somewhat controversial. Makes several contacts with the 16S rRNA in the 70S ribosome. This Dictyoglomus turgidum (strain DSM 6724 / Z-1310) protein is Large ribosomal subunit protein uL2.